A 139-amino-acid polypeptide reads, in one-letter code: Thyrotropin subunit beta (139 aa).

Positions 1-20 (MELSVAMCGLLCLLFSQAVP) are cleaved as a signal peptide. 6 disulfides stabilise this stretch: C22–C72, C36–C87, C39–C127, C47–C103, C51–C105, and C108–C115. N43 is a glycosylation site (N-linked (GlcNAc...) asparagine).

Belongs to the glycoprotein hormones subunit beta family. Heterodimer of a common alpha chain and a unique beta chain which confers biological specificity to thyrotropin, lutropin, follitropin and gonadotropin.

The protein resides in the secreted. Functionally, indispensable for the control of thyroid structure and metabolism. May play some role in the biological processes of the immature fishes. The chain is Thyrotropin subunit beta (tshb) from Salmo salar (Atlantic salmon).